The following is a 317-amino-acid chain: Taste receptor type 2 member 14 (317 aa).

Over methionine 1–serine 7 the chain is Extracellular. The chain crosses the membrane as a helical span at residues isoleucine 8–alanine 28. At leucine 29–lysine 55 the chain is on the cytoplasmic side. Residues isoleucine 56–phenylalanine 76 form a helical membrane-spanning segment. Topologically, residues alanine 77–asparagine 87 are extracellular. Cholesterol is bound by residues threonine 86 and tryptophan 89. The helical transmembrane segment at isoleucine 88–phenylalanine 108 threads the bilayer. Residues leucine 109–valine 129 lie on the Cytoplasmic side of the membrane. A helical membrane pass occupies residues valine 130–isoleucine 150. Topologically, residues histidine 151–threonine 184 are extracellular. N-linked (GlcNAc...) asparagine glycosylation is found at asparagine 153, asparagine 162, and asparagine 171. Residue valine 180 participates in cholesterol binding. A helical membrane pass occupies residues valine 185–residue 205. At tryptophan 206–serine 232 the chain is on the cytoplasmic side. The chain crosses the membrane as a helical span at residues valine 233–threonine 253. Topologically, residues serine 254 to leucine 261 are extracellular. Residues isoleucine 262–leucine 282 traverse the membrane as a helical segment. Serine 265 and methionine 268 together coordinate cholesterol. The Cytoplasmic portion of the chain corresponds to glycine 283–serine 317.

It belongs to the G-protein coupled receptor T2R family. As to quaternary structure, core component of the TAS2R14-GNAI1 complex, consisting of TAS2R14, GNAI1, GNB1 and GNG2; within the complex interacts with GNAI1. Core component of the TAS2R14-GNAT3 complex, consisting of TAS2R14, GNAT3, GNB1 and GNG2; within the complex interacts with GNAT3. Core component of the TAS2R14-GNAS2 complex, consisting of TAS2R14, GNAS2, GNB1 and GNG2; within the complex interacts with GNAS2.

It is found in the membrane. It catalyses the reaction Ca(2+)(in) = Ca(2+)(out). The catalysed reaction is 3',5'-cyclic AMP(in) = 3',5'-cyclic AMP(out). With respect to regulation, basal activity is enhanced by binding to bitter tastants, such as flufenamic acid and aristolochic acid. Regulated by cholesterol in a concentration-dependent manner. Gustducin-linked G-protein coupled receptor that plays a role in the perception of bitterness. The activity of this receptor stimulates GNAT3, activating the gustducin G-protein pathway. Likely plays a role in sensing the chemical composition of the gastrointestinal content and other extra-oral tissues via the inhibitory G-protein pathways. This chain is Taste receptor type 2 member 14 (TAS2R14), found in Pan troglodytes (Chimpanzee).